A 362-amino-acid chain; its full sequence is Putative sphingolipid delta(4)-desaturase/C4-monooxygenase (362 aa).

Transmembrane regions (helical) follow at residues 45–61, 71–91, and 107–127; these read YVVS…CWLL, LEAY…IHDI, and FFGM…FKKY. Positions 89–93 match the Histidine box-1 motif; that stretch reads HDISH. The Histidine box-2 motif lies at 128–132; the sequence is HVEHH. 2 helical membrane-spanning segments follow: residues 160-177 and 198-218; these read LLWL…PLII and LLIL…GTII. Residues 259 to 263 carry the Histidine box-3 motif; it reads HVEHH.

The protein belongs to the fatty acid desaturase type 1 family. DEGS subfamily.

It localises to the membrane. It catalyses the reaction an N-acyl-15-methylhexadecasphinganine + 2 Fe(II)-[cytochrome b5] + O2 + 2 H(+) = an N-acyl-4-hydroxy-15-methylhexadecasphinganine + 2 Fe(III)-[cytochrome b5] + H2O. The catalysed reaction is an N-acyl-15-methylhexadecasphinganine + 2 Fe(II)-[cytochrome b5] + O2 + 2 H(+) = an N-acyl-15-methylhexadecasphing-4-enine + 2 Fe(III)-[cytochrome b5] + 2 H2O. It carries out the reaction a dihydroceramide + 2 Fe(II)-[cytochrome b5] + O2 + 2 H(+) = a phytoceramide + 2 Fe(III)-[cytochrome b5] + H2O. The enzyme catalyses an N-acylsphinganine + 2 Fe(II)-[cytochrome b5] + O2 + 2 H(+) = an N-acylsphing-4-enine + 2 Fe(III)-[cytochrome b5] + 2 H2O. It catalyses the reaction N-octanoylsphinganine + 2 Fe(II)-[cytochrome b5] + O2 + 2 H(+) = N-octanoyl-4-hydroxysphinganine + 2 Fe(III)-[cytochrome b5] + H2O. The catalysed reaction is an N-acylsphinganine + 2 Fe(II)-[cytochrome b5] + O2 + 2 H(+) = an N-acyl-(4R)-4-hydroxysphinganine + 2 Fe(III)-[cytochrome b5] + H2O. The protein operates within lipid metabolism; sphingolipid metabolism. Functionally, bifunctional enzyme which acts both as a sphingolipid delta(4)-desaturase and a sphingolipid C4-monooxygenase. C.elegans contain specific sphingoid bases, which are unique or different in structure compared to the sphingoid bases found in other animals. Two examples of these distinctive compounds are: 15-methylhexadecasphinganine and 15-methylhexadecasphing-4-enine and this enzyme can catalyze their conversion. The sequence is that of Putative sphingolipid delta(4)-desaturase/C4-monooxygenase (ttm-5) from Caenorhabditis elegans.